The primary structure comprises 196 residues: Imidazoleglycerol-phosphate dehydratase (196 aa).

It belongs to the imidazoleglycerol-phosphate dehydratase family.

It is found in the cytoplasm. The catalysed reaction is D-erythro-1-(imidazol-4-yl)glycerol 3-phosphate = 3-(imidazol-4-yl)-2-oxopropyl phosphate + H2O. It functions in the pathway amino-acid biosynthesis; L-histidine biosynthesis; L-histidine from 5-phospho-alpha-D-ribose 1-diphosphate: step 6/9. The protein is Imidazoleglycerol-phosphate dehydratase of Zymomonas mobilis subsp. mobilis (strain ATCC 31821 / ZM4 / CP4).